Here is a 149-residue protein sequence, read N- to C-terminus: MADQLTEEQVTEFKEAFSLFDKDGDGCITTRELGTVMRSLGQNPTEAELRDMMSEIDRDGNGTVDFPEFLGMMARKMKDTDNEEEIREAFRVFDKDGNGFVSAAELRHVMTRLGEKLSDEEVDEMIRAADTDGDGQVNYEEFVRVLVSK.

EF-hand domains are found at residues 8–43 (EQVT…LGQN), 44–79 (PTEA…KMKD), 81–116 (DNEE…LGEK), and 117–149 (LSDE…LVSK). The Ca(2+) site is built by Asp-21, Asp-23, Asp-25, Cys-27, Glu-32, Asp-57, Asp-59, Asn-61, Thr-63, Glu-68, Asp-94, Asp-96, Asn-98, Glu-105, Asp-130, Asp-132, Asp-134, Gln-136, and Glu-141.

The protein belongs to the calmodulin family. Interacts with MYO10, the interaction is calcium-dependent and essential for MYO10 function in filopodial extension. In terms of tissue distribution, expressed in normal mammary, prostate, cervical, and epidermal tissues. It is greatly reduced or undetectable in transformed cells.

In terms of biological role, may function as a specific light chain of unconventional myosin-10 (MYO10), also enhances MYO10 translation, possibly by acting as a chaperone for the emerging MYO10 heavy chain protein. May compete with calmodulin by binding, with different affinities, to cellular substrates. This is Calmodulin-like protein 3 (CALML3) from Homo sapiens (Human).